We begin with the raw amino-acid sequence, 400 residues long: Formate-dependent phosphoribosylglycinamide formyltransferase (400 aa).

Residues 22–23 and glutamate 82 each bind N(1)-(5-phospho-beta-D-ribosyl)glycinamide; that span reads EL. ATP contacts are provided by residues arginine 115, lysine 157, 162–167, 197–200, and glutamate 205; these read SSGKGQ and EGFV. Residues 120–315 enclose the ATP-grasp domain; sequence RLAAETLGLP…EFELHARAIL (196 aa). The Mg(2+) site is built by glutamate 274 and glutamate 286. N(1)-(5-phospho-beta-D-ribosyl)glycinamide-binding positions include aspartate 293, lysine 362, and 369–370; that span reads RR.

This sequence belongs to the PurK/PurT family. Homodimer.

It catalyses the reaction N(1)-(5-phospho-beta-D-ribosyl)glycinamide + formate + ATP = N(2)-formyl-N(1)-(5-phospho-beta-D-ribosyl)glycinamide + ADP + phosphate + H(+). It participates in purine metabolism; IMP biosynthesis via de novo pathway; N(2)-formyl-N(1)-(5-phospho-D-ribosyl)glycinamide from N(1)-(5-phospho-D-ribosyl)glycinamide (formate route): step 1/1. Involved in the de novo purine biosynthesis. Catalyzes the transfer of formate to 5-phospho-ribosyl-glycinamide (GAR), producing 5-phospho-ribosyl-N-formylglycinamide (FGAR). Formate is provided by PurU via hydrolysis of 10-formyl-tetrahydrofolate. In Mycolicibacterium vanbaalenii (strain DSM 7251 / JCM 13017 / BCRC 16820 / KCTC 9966 / NRRL B-24157 / PYR-1) (Mycobacterium vanbaalenii), this protein is Formate-dependent phosphoribosylglycinamide formyltransferase.